The chain runs to 47 residues: Ribosome-inactivating protein luffin P1 (47 aa).

Disulfide bonds link Cys-12–Cys-33 and Cys-16–Cys-29.

Homotetramer.

The enzyme catalyses Endohydrolysis of the N-glycosidic bond at one specific adenosine on the 28S rRNA.. Its function is as follows. Inhibits protein synthesis in animal cells. This is Ribosome-inactivating protein luffin P1 from Luffa aegyptiaca (Sponge gourd).